A 672-amino-acid chain; its full sequence is SHC SH2 domain-binding protein 1 (672 aa).

Ala-2 is subject to N-acetylalanine. The residue at position 5 (Ser-5) is a Phosphoserine. Thr-7 carries the phosphothreonine modification. Ser-31, Ser-42, Ser-44, Ser-47, and Ser-273 each carry phosphoserine. 5 PbH1 repeats span residues 428–451, 452–473, 474–496, 497–518, and 526–548; these read GADIKISGIKFVQHDAVEGILIVH, RGKTTLENCVLQCETTGVTVRT, SAEFLMKNSDLYGAKGAGIEIYP, GSQCTLSDNGIHHCKEGILIKD, and IPKISMVNNIIHNNEGYGVVLVK. The residue at position 634 (Ser-634) is a Phosphoserine.

As to quaternary structure, interacts directly with isoform p52shc of SHC1 via its SH2 domain. Interacts with TRIM71; leading to enhanced SHCBP1 protein stability. Interacts with both members of the centralspindlin complex, KIF23 and RACGAP1.

The protein localises to the midbody. It is found in the cytoplasm. The protein resides in the cytoskeleton. Its subcellular location is the spindle. Its function is as follows. May play a role in signaling pathways governing cellular proliferation, cell growth and differentiation. May be a component of a novel signaling pathway downstream of Shc. Acts as a positive regulator of FGF signaling in neural progenitor cells. This chain is SHC SH2 domain-binding protein 1 (SHCBP1), found in Homo sapiens (Human).